The chain runs to 319 residues: Acetyl esterase (319 aa).

The short motif at 91 to 93 (HGG) is the Involved in the stabilization of the negatively charged intermediate by the formation of the oxyanion hole element. Active-site residues include Ser165, Asp262, and His292.

This sequence belongs to the 'GDXG' lipolytic enzyme family. As to quaternary structure, homodimer. Interacts with MalT and MelA.

Its subcellular location is the cytoplasm. In terms of biological role, displays esterase activity towards short chain fatty esters (acyl chain length of up to 8 carbons). Able to hydrolyze triacetylglycerol (triacetin) and tributyrylglycerol (tributyrin), but not trioleylglycerol (triolein) or cholesterol oleate. Negatively regulates MalT activity by antagonizing maltotriose binding. Inhibits MelA galactosidase activity. This chain is Acetyl esterase, found in Escherichia coli O17:K52:H18 (strain UMN026 / ExPEC).